A 103-amino-acid chain; its full sequence is Small ribosomal subunit protein uS10 (103 aa).

The protein belongs to the universal ribosomal protein uS10 family. Part of the 30S ribosomal subunit.

Its function is as follows. Involved in the binding of tRNA to the ribosomes. The chain is Small ribosomal subunit protein uS10 from Psychrobacter arcticus (strain DSM 17307 / VKM B-2377 / 273-4).